The primary structure comprises 209 residues: ATP-dependent Clp protease proteolytic subunit (209 aa).

The active-site Nucleophile is the serine 111. Histidine 136 is a catalytic residue.

This sequence belongs to the peptidase S14 family. Fourteen ClpP subunits assemble into 2 heptameric rings which stack back to back to give a disk-like structure with a central cavity, resembling the structure of eukaryotic proteasomes.

It is found in the cytoplasm. The catalysed reaction is Hydrolysis of proteins to small peptides in the presence of ATP and magnesium. alpha-casein is the usual test substrate. In the absence of ATP, only oligopeptides shorter than five residues are hydrolyzed (such as succinyl-Leu-Tyr-|-NHMec, and Leu-Tyr-Leu-|-Tyr-Trp, in which cleavage of the -Tyr-|-Leu- and -Tyr-|-Trp bonds also occurs).. Cleaves peptides in various proteins in a process that requires ATP hydrolysis. Has a chymotrypsin-like activity. Plays a major role in the degradation of misfolded proteins. This Dechloromonas aromatica (strain RCB) protein is ATP-dependent Clp protease proteolytic subunit.